The primary structure comprises 167 residues: N-alpha-acetyltransferase (167 aa).

Positions 12-167 (FTLRNARMDD…EDAYLMARPL (156 aa)) constitute an N-acetyltransferase domain. A substrate-binding site is contributed by Y37. H88 provides a ligand contact to Zn(2+). Acetyl-CoA is bound by residues 92 to 94 (IAV) and 100 to 105 (RKGIAT). E127 provides a ligand contact to Zn(2+). Acetyl-CoA-binding positions include N132 and 139–141 (YEK). Y154 contacts substrate.

It belongs to the acetyltransferase family. ARD1 subfamily. In terms of assembly, homodimer.

It localises to the cytoplasm. The catalysed reaction is N-terminal L-alanyl-[protein] + acetyl-CoA = N-terminal N(alpha)-acetyl-L-alanyl-[protein] + CoA + H(+). It carries out the reaction N-terminal L-seryl-[protein] + acetyl-CoA = N-terminal N(alpha)-acetyl-L-seryl-[protein] + CoA + H(+). It catalyses the reaction N-terminal L-methionyl-L-leucyl-[protein] + acetyl-CoA = N-terminal N(alpha)-acetyl-L-methionyl-L-leucyl-[protein] + CoA + H(+). The enzyme catalyses N-terminal L-methionyl-L-glutamyl-[protein] + acetyl-CoA = N-terminal N(alpha)-acetyl-L-methionyl-L-glutamyl-[protein] + CoA + H(+). Displays alpha (N-terminal) acetyltransferase activity. Catalyzes the covalent attachment of an acetyl moiety from acetyl-CoA to the free alpha-amino group at the N-terminus of a protein. NAT is able to acetylate the alpha-amino group of methionine, alanine and serine N-terminal residue substrates, however it has a preference for Ser-N-terminal substrates. The polypeptide is N-alpha-acetyltransferase (Saccharolobus solfataricus (strain ATCC 35092 / DSM 1617 / JCM 11322 / P2) (Sulfolobus solfataricus)).